A 568-amino-acid polypeptide reads, in one-letter code: DNA ligase (568 aa).

Position 249 (E249) interacts with ATP. K251 acts as the N6-AMP-lysine intermediate in catalysis. Residues R256, R271, E301, F342, R418, and K424 each contribute to the ATP site.

Belongs to the ATP-dependent DNA ligase family. It depends on Mg(2+) as a cofactor.

It catalyses the reaction ATP + (deoxyribonucleotide)n-3'-hydroxyl + 5'-phospho-(deoxyribonucleotide)m = (deoxyribonucleotide)n+m + AMP + diphosphate.. DNA ligase that seals nicks in double-stranded DNA during DNA replication, DNA recombination and DNA repair. In Methanocella arvoryzae (strain DSM 22066 / NBRC 105507 / MRE50), this protein is DNA ligase.